A 196-amino-acid chain; its full sequence is Xanthine phosphoribosyltransferase (196 aa).

Xanthine contacts are provided by leucine 26 and asparagine 33. 134–138 serves as a coordination point for 5-phospho-alpha-D-ribose 1-diphosphate; that stretch reads ASGEA. Lysine 162 lines the xanthine pocket.

It belongs to the purine/pyrimidine phosphoribosyltransferase family. Xpt subfamily. In terms of assembly, homodimer.

Its subcellular location is the cytoplasm. The enzyme catalyses XMP + diphosphate = xanthine + 5-phospho-alpha-D-ribose 1-diphosphate. It functions in the pathway purine metabolism; XMP biosynthesis via salvage pathway; XMP from xanthine: step 1/1. In terms of biological role, converts the preformed base xanthine, a product of nucleic acid breakdown, to xanthosine 5'-monophosphate (XMP), so it can be reused for RNA or DNA synthesis. The polypeptide is Xanthine phosphoribosyltransferase (Moorella thermoacetica (strain ATCC 39073 / JCM 9320)).